The chain runs to 355 residues: Ribosomal RNA small subunit methyltransferase H (355 aa).

Residues 47 to 49 (GGY), D65, F92, D113, and Q120 each bind S-adenosyl-L-methionine. The tract at residues 332–355 (LLPLATLPETSHPKSASHSKSRRR) is disordered. The segment covering 346–355 (SASHSKSRRR) has biased composition (basic residues).

The protein belongs to the methyltransferase superfamily. RsmH family.

The protein localises to the cytoplasm. The enzyme catalyses cytidine(1402) in 16S rRNA + S-adenosyl-L-methionine = N(4)-methylcytidine(1402) in 16S rRNA + S-adenosyl-L-homocysteine + H(+). Functionally, specifically methylates the N4 position of cytidine in position 1402 (C1402) of 16S rRNA. The sequence is that of Ribosomal RNA small subunit methyltransferase H from Beijerinckia indica subsp. indica (strain ATCC 9039 / DSM 1715 / NCIMB 8712).